The chain runs to 463 residues: Exodeoxyribonuclease 7 large subunit (463 aa).

Belongs to the XseA family. As to quaternary structure, heterooligomer composed of large and small subunits.

It is found in the cytoplasm. The catalysed reaction is Exonucleolytic cleavage in either 5'- to 3'- or 3'- to 5'-direction to yield nucleoside 5'-phosphates.. Functionally, bidirectionally degrades single-stranded DNA into large acid-insoluble oligonucleotides, which are then degraded further into small acid-soluble oligonucleotides. In Klebsiella pneumoniae (strain 342), this protein is Exodeoxyribonuclease 7 large subunit.